The sequence spans 348 residues: Flap endonuclease 1 (348 aa).

Positions 1–98 (MGLAELRELI…ETLERRRERK (98 aa)) are N-domain. Mg(2+) is bound by residues Asp-28, Asp-80, Glu-149, Glu-151, Asp-170, Asp-172, and Asp-234. Residues 113–256 (EREKYARQVA…RALQLIRKYG (144 aa)) are I-domain. Positions 340-348 (RQETLDAFF) are interaction with PCNA.

The protein belongs to the XPG/RAD2 endonuclease family. FEN1 subfamily. In terms of assembly, interacts with PCNA. PCNA stimulates the nuclease activity without altering cleavage specificity. Requires Mg(2+) as cofactor.

Functionally, structure-specific nuclease with 5'-flap endonuclease and 5'-3' exonuclease activities involved in DNA replication and repair. During DNA replication, cleaves the 5'-overhanging flap structure that is generated by displacement synthesis when DNA polymerase encounters the 5'-end of a downstream Okazaki fragment. Binds the unpaired 3'-DNA end and kinks the DNA to facilitate 5' cleavage specificity. Cleaves one nucleotide into the double-stranded DNA from the junction in flap DNA, leaving a nick for ligation. Also involved in the base excision repair (BER) pathway. Acts as a genome stabilization factor that prevents flaps from equilibrating into structures that lead to duplications and deletions. Also possesses 5'-3' exonuclease activity on nicked or gapped double-stranded DNA. In Methanopyrus kandleri (strain AV19 / DSM 6324 / JCM 9639 / NBRC 100938), this protein is Flap endonuclease 1.